The following is a 150-amino-acid chain: Heat shock protein beta-3 (150 aa).

Residues 47 to 150 (KTRAAQSPPV…VEVKDPVGTK (104 aa)) form the sHSP domain.

The protein belongs to the small heat shock protein (HSP20) family.

The protein localises to the cytoplasm. It is found in the nucleus. Inhibitor of actin polymerization. This chain is Heat shock protein beta-3 (HSPB3), found in Homo sapiens (Human).